The following is a 526-amino-acid chain: GMP synthase [glutamine-hydrolyzing] (526 aa).

A Glutamine amidotransferase type-1 domain is found at Arg9–Leu208. Cys86 (nucleophile) is an active-site residue. Residues His182 and Glu184 contribute to the active site. The GMPS ATP-PPase domain occupies Trp209–Arg401. Ser236–Ser242 is a binding site for ATP.

In terms of assembly, homodimer.

The enzyme catalyses XMP + L-glutamine + ATP + H2O = GMP + L-glutamate + AMP + diphosphate + 2 H(+). It participates in purine metabolism; GMP biosynthesis; GMP from XMP (L-Gln route): step 1/1. Its function is as follows. Catalyzes the synthesis of GMP from XMP. The polypeptide is GMP synthase [glutamine-hydrolyzing] (Hahella chejuensis (strain KCTC 2396)).